A 405-amino-acid polypeptide reads, in one-letter code: Phosphoglycerate kinase (405 aa).

Residues aspartate 24 to asparagine 26, arginine 40, histidine 63 to arginine 66, arginine 122, and arginine 162 each bind substrate. ATP is bound by residues lysine 212, glutamate 331, and glycine 361 to serine 364.

The protein belongs to the phosphoglycerate kinase family. As to quaternary structure, monomer.

It is found in the cytoplasm. The enzyme catalyses (2R)-3-phosphoglycerate + ATP = (2R)-3-phospho-glyceroyl phosphate + ADP. The protein operates within carbohydrate degradation; glycolysis; pyruvate from D-glyceraldehyde 3-phosphate: step 2/5. This Corynebacterium aurimucosum (strain ATCC 700975 / DSM 44827 / CIP 107346 / CN-1) (Corynebacterium nigricans) protein is Phosphoglycerate kinase.